Consider the following 502-residue polypeptide: ATP synthase subunit alpha (502 aa).

169–176 lines the ATP pocket; it reads GDRQTGKT.

Belongs to the ATPase alpha/beta chains family. F-type ATPases have 2 components, CF(1) - the catalytic core - and CF(0) - the membrane proton channel. CF(1) has five subunits: alpha(3), beta(3), gamma(1), delta(1), epsilon(1). CF(0) has three main subunits: a(1), b(2) and c(9-12). The alpha and beta chains form an alternating ring which encloses part of the gamma chain. CF(1) is attached to CF(0) by a central stalk formed by the gamma and epsilon chains, while a peripheral stalk is formed by the delta and b chains.

It localises to the cell membrane. The enzyme catalyses ATP + H2O + 4 H(+)(in) = ADP + phosphate + 5 H(+)(out). Produces ATP from ADP in the presence of a proton gradient across the membrane. The alpha chain is a regulatory subunit. This is ATP synthase subunit alpha from Bacillus pumilus (strain SAFR-032).